The chain runs to 151 residues: Brain ribonuclease (151 aa).

Residues 1–25 (KESAAAKFRRQHMDAGSSSSGNSNY) are disordered. Substrate is bound by residues lysine 7 and arginine 10. The active-site Proton acceptor is the histidine 12. 4 cysteine pairs are disulfide-bonded: cysteine 26/cysteine 84, cysteine 40/cysteine 95, cysteine 58/cysteine 110, and cysteine 65/cysteine 72. A substrate-binding site is contributed by 41 to 45 (KPVNT). Asparagine 62 is a glycosylation site (N-linked (GlcNAc...) asparagine). Residues lysine 66 and arginine 85 each contribute to the substrate site. Histidine 119 functions as the Proton donor in the catalytic mechanism. The O-linked (GalNAc...) threonine glycan is linked to threonine 129. Serine 133 carries O-linked (GalNAc...) serine glycosylation.

This sequence belongs to the pancreatic ribonuclease family.

It is found in the secreted. The polypeptide is Brain ribonuclease (BRN) (Axis porcinus (Hog deer)).